A 486-amino-acid polypeptide reads, in one-letter code: Glycogen synthase (486 aa).

K20 provides a ligand contact to ADP-alpha-D-glucose.

Belongs to the glycosyltransferase 1 family. Bacterial/plant glycogen synthase subfamily.

The catalysed reaction is [(1-&gt;4)-alpha-D-glucosyl](n) + ADP-alpha-D-glucose = [(1-&gt;4)-alpha-D-glucosyl](n+1) + ADP + H(+). It functions in the pathway glycan biosynthesis; glycogen biosynthesis. In terms of biological role, synthesizes alpha-1,4-glucan chains using ADP-glucose. The protein is Glycogen synthase of Aeromonas hydrophila subsp. hydrophila (strain ATCC 7966 / DSM 30187 / BCRC 13018 / CCUG 14551 / JCM 1027 / KCTC 2358 / NCIMB 9240 / NCTC 8049).